The chain runs to 72 residues: Translation initiation factor IF-1 (72 aa).

In terms of domain architecture, S1-like spans 1–72; that stretch reads MSKSDYIELE…TKGRITFRHK (72 aa).

Belongs to the IF-1 family. As to quaternary structure, component of the 30S ribosomal translation pre-initiation complex which assembles on the 30S ribosome in the order IF-2 and IF-3, IF-1 and N-formylmethionyl-tRNA(fMet); mRNA recruitment can occur at any time during PIC assembly.

It localises to the cytoplasm. Functionally, one of the essential components for the initiation of protein synthesis. Stabilizes the binding of IF-2 and IF-3 on the 30S subunit to which N-formylmethionyl-tRNA(fMet) subsequently binds. Helps modulate mRNA selection, yielding the 30S pre-initiation complex (PIC). Upon addition of the 50S ribosomal subunit IF-1, IF-2 and IF-3 are released leaving the mature 70S translation initiation complex. The chain is Translation initiation factor IF-1 from Vesicomyosocius okutanii subsp. Calyptogena okutanii (strain HA).